We begin with the raw amino-acid sequence, 329 residues long: Phosphate acyltransferase (329 aa).

Belongs to the PlsX family. In terms of assembly, homodimer. Probably interacts with PlsY.

It localises to the cytoplasm. It catalyses the reaction a fatty acyl-[ACP] + phosphate = an acyl phosphate + holo-[ACP]. The protein operates within lipid metabolism; phospholipid metabolism. Functionally, catalyzes the reversible formation of acyl-phosphate (acyl-PO(4)) from acyl-[acyl-carrier-protein] (acyl-ACP). This enzyme utilizes acyl-ACP as fatty acyl donor, but not acyl-CoA. The protein is Phosphate acyltransferase of Campylobacter lari (strain RM2100 / D67 / ATCC BAA-1060).